Here is a 130-residue protein sequence, read N- to C-terminus: Small ribosomal subunit protein uS11 (130 aa).

Belongs to the universal ribosomal protein uS11 family. In terms of assembly, part of the 30S ribosomal subunit. Interacts with proteins S7 and S18. Binds to IF-3.

Located on the platform of the 30S subunit, it bridges several disparate RNA helices of the 16S rRNA. Forms part of the Shine-Dalgarno cleft in the 70S ribosome. In Acidiphilium cryptum (strain JF-5), this protein is Small ribosomal subunit protein uS11.